The sequence spans 428 residues: Enolase (428 aa).

Position 163 (Gln-163) interacts with (2R)-2-phosphoglycerate. The active-site Proton donor is Glu-205. Mg(2+) contacts are provided by Asp-242, Glu-284, and Asp-311. (2R)-2-phosphoglycerate contacts are provided by Lys-336, Arg-365, Ser-366, and Lys-387. Lys-336 acts as the Proton acceptor in catalysis.

It belongs to the enolase family. Mg(2+) is required as a cofactor.

It localises to the cytoplasm. It is found in the secreted. The protein localises to the cell surface. The enzyme catalyses (2R)-2-phosphoglycerate = phosphoenolpyruvate + H2O. Its pathway is carbohydrate degradation; glycolysis; pyruvate from D-glyceraldehyde 3-phosphate: step 4/5. Functionally, catalyzes the reversible conversion of 2-phosphoglycerate (2-PG) into phosphoenolpyruvate (PEP). It is essential for the degradation of carbohydrates via glycolysis. This is Enolase from Tropheryma whipplei (strain TW08/27) (Whipple's bacillus).